Reading from the N-terminus, the 1074-residue chain is Collagen, type I, alpha 1a (1074 aa).

Over residues 1–13 (KSPAMPVPGPMGP) the composition is skewed to pro residues. Residues 1–1010 (KSPAMPVPGP…PQEKAPDPYR (1010 aa)) form a disordered region. Positions 14-36 (MGPRSGPQGFPGEAGAAGAMGPR) are enriched in low complexity. A compositionally biased stretch (basic and acidic residues) spans 45–59 (NGEDGESGKPGRGGE). Positions 129–147 (TGAAGAAGARGNDGAAGAA) are enriched in low complexity. The segment covering 149–162 (PPGPTGPAGPPGFP) has biased composition (pro residues). Over residues 163-181 (GGPGAKGDAGAQGGRGPEG) the composition is skewed to gly residues. Composition is skewed to low complexity over residues 182–225 (PAGA…AGAP), 234–272 (SGPQ…APGV), and 290–299 (EPGAAGARGA). The span at 301–313 (GERGGPGGRGFPG) shows a compositional bias: gly residues. Composition is skewed to low complexity over residues 377 to 392 (VGAR…PGPK), 469 to 530 (VPGE…QGMP), and 563 to 578 (RGLT…AGAT). The segment covering 588 to 597 (GPVGPGGARG) has biased composition (gly residues). Low complexity-rich tracts occupy residues 611–647 (AGFA…AGPT) and 661–683 (PKGA…AGRV). The span at 685–697 (PPGPSGNPGPPGP) shows a compositional bias: pro residues. Low complexity-rich tracts occupy residues 715–742 (PAGR…SEGA) and 803–823 (PGLA…SEGS). Residues 847 to 857 (APGPPGAPGPV) show a composition bias toward pro residues. Positions 871-890 (PAGPAGSAGPAGPRGPAGAP) are enriched in low complexity. Residues 893–907 (RGDKGESGEAGERGH) are compositionally biased toward basic and acidic residues. Positions 920–956 (SGSSGEQGPAGAAGPAGPRGPAGSAGSPGKDGMSGLP) are enriched in low complexity. The span at 974-986 (AGPPGPPGPPGAP) shows a compositional bias: pro residues. Residues 1014 to 1074 (LEVDSTLKSL…GLEVGPVCFL (61 aa)) enclose the Fibrillar collagen NC1 domain.

Belongs to the fibrillar collagen family.

The protein localises to the secreted. Its subcellular location is the extracellular space. It localises to the extracellular matrix. This chain is Collagen, type I, alpha 1a, found in Epinephelus marginatus (Dusky grouper).